The primary structure comprises 389 residues: Putative F-box protein At1g47790 (389 aa).

The F-box domain occupies 19-65; sequence SKPTSSFPLDLASEILLRLPVKSVVRFRCVSKLWSSIITDPYFIKTY.

The polypeptide is Putative F-box protein At1g47790 (Arabidopsis thaliana (Mouse-ear cress)).